A 273-amino-acid polypeptide reads, in one-letter code: Bis(5'-nucleosyl)-tetraphosphatase, symmetrical (273 aa).

It belongs to the Ap4A hydrolase family.

It catalyses the reaction P(1),P(4)-bis(5'-adenosyl) tetraphosphate + H2O = 2 ADP + 2 H(+). Functionally, hydrolyzes diadenosine 5',5'''-P1,P4-tetraphosphate to yield ADP. The chain is Bis(5'-nucleosyl)-tetraphosphatase, symmetrical from Aeromonas salmonicida (strain A449).